A 337-amino-acid chain; its full sequence is Eukaryotic translation initiation factor 3 subunit H (337 aa).

The 133-residue stretch at 21–153 (VQCDGLAVMK…LKAYRLTPQA (133 aa)) folds into the MPN domain.

Belongs to the eIF-3 subunit H family. In terms of assembly, component of the eukaryotic translation initiation factor 3 (eIF-3) complex. The eIF-3 complex interacts with pix. Interacts with mxt.

It is found in the cytoplasm. In terms of biological role, component of the eukaryotic translation initiation factor 3 (eIF-3) complex, which is involved in protein synthesis of a specialized repertoire of mRNAs and, together with other initiation factors, stimulates binding of mRNA and methionyl-tRNAi to the 40S ribosome. The eIF-3 complex specifically targets and initiates translation of a subset of mRNAs involved in cell proliferation. The sequence is that of Eukaryotic translation initiation factor 3 subunit H from Drosophila pseudoobscura pseudoobscura (Fruit fly).